Here is a 454-residue protein sequence, read N- to C-terminus: Butyrophilin-like protein 2 (454 aa).

Residues 1–6 (MVDCPR) are Cytoplasmic-facing. Residues 7–23 (YSLSGVAASFLFVLLTI) form a helical; Signal-anchor for type II membrane protein membrane-spanning segment. Over 24–454 (KHPDDFRVVG…KTARFPLSGW (431 aa)) the chain is Extracellular. Ig-like V-type domains are found at residues 27 to 140 (DDFR…VLLQ), 148 to 234 (PNIH…ATIA), 244 to 355 (ASVS…ARVD), and 365 to 452 (PRIT…FPLS). 4 disulfides stabilise this stretch: cysteine 50–cysteine 124, cysteine 164–cysteine 218, cysteine 267–cysteine 341, and cysteine 381–cysteine 435. N-linked (GlcNAc...) asparagine glycans are attached at residues asparagine 210, asparagine 296, asparagine 427, and asparagine 432.

The protein belongs to the immunoglobulin superfamily. BTN/MOG family. In terms of tissue distribution, highly expressed in intestine and at reduced levels in lung and stomach. Also expressed in thymus, spleen, lymph nodes, T-cells, B-cells, and macrophages.

Its subcellular location is the membrane. Its function is as follows. Negative regulator of T-cell proliferation. This Mus musculus (Mouse) protein is Butyrophilin-like protein 2.